We begin with the raw amino-acid sequence, 175 residues long: Coagulogen (175 aa).

8 disulfide bridges follow: Cys-8-Cys-167, Cys-10-Cys-95, Cys-60-Cys-161, Cys-65-Cys-121, Cys-75-Cys-168, Cys-88-Cys-140, Cys-127-Cys-170, and Cys-134-Cys-172.

Belongs to the coagulin family. In terms of assembly, coagulogen is cleaved after Arg-18 and Arg-46 by a clotting enzyme contained in the hemocyte and activated by a bacterial endotoxin (lipopolysaccharide). This cleavage releases the peptide C and leaves 2 chains of coagulin, A and B, linked by two disulfide bonds. Coagulin molecules interlink to form a gel. In terms of tissue distribution, hemolymph.

The protein resides in the secreted. Coagulogen is a gel-forming protein of hemolymph; it hinders the spread of invaders by immobilizing them. The protein is Coagulogen of Tachypleus gigas (Southeast Asian horseshoe crab).